Consider the following 319-residue polypeptide: Oligopeptide transport system permease protein OppB (319 aa).

6 consecutive transmembrane segments (helical) span residues 9 to 29, 99 to 119, 137 to 157, 183 to 203, 248 to 268, and 289 to 309; these read ILLMIPQLFILSILVFFFAKL, FWMSLLSVILTYLFAIPMSIV, SITFGIPPYVFYLLIIFIFGY, IYHMILPAFSLAVFGTVGIFT, FGFVITGLLGGAIFAETIFGY, and ALILLNGFLGLLGALLSDIIM. One can recognise an ABC transmembrane type-1 domain in the interval 95 to 305; it reads AINTFWMSLL…FLGLLGALLS (211 aa).

The protein belongs to the binding-protein-dependent transport system permease family. OppBC subfamily. As to quaternary structure, the complex is composed of two ATP-binding proteins (OppD and OppF), two transmembrane proteins (OppB and OppC) and a solute-binding protein (OppA).

It is found in the cell membrane. In terms of biological role, part of the ABC transporter complex OppABCDF involved in the uptake of oligopeptides. Probably responsible for the translocation of the substrate across the membrane. Essential for uptake of peptides larger than three amino acids and for growth in milk. The polypeptide is Oligopeptide transport system permease protein OppB (oppB) (Lactococcus lactis subsp. lactis (strain IL1403) (Streptococcus lactis)).